The chain runs to 1475 residues: Peroxidasin homolog (1475 aa).

The first 23 residues, 1 to 23 (MAVRPTRRCLLALLLCFAWWAMA), serve as a signal peptide directing secretion. In terms of domain architecture, LRRNT spans 24–60 (VVASKQGAGCPSRCLCFRTTVRCMHLLLEAVPAVAPQ). 2 cysteine pairs are disulfide-bonded: Cys-33–Cys-39 and Cys-37–Cys-46. LRR repeat units lie at residues 58–81 (APQT…AFRR), 82–105 (LRSL…AFED), 107–129 (ENLK…AFKG), 130–153 (LASL…SFQH), 154–177 (LPKL…TFSQ), and 179–201 (ESMK…LWLA). In terms of domain architecture, LRRCT spans 189 to 241 (NALHCDCEILWLADLLKTYAQSGNAQAAATCEYPRRIQGRSVATITPEELNCE). 6 disulfide bridges follow: Cys-193/Cys-240, Cys-195/Cys-219, Cys-264/Cys-314, Cys-360/Cys-409, Cys-451/Cys-499, and Cys-543/Cys-591. Ig-like C2-type domains are found at residues 243–329 (PRIT…QEVT), 339–425 (PTFV…AFII), 430–517 (PQFT…LTVQ), and 518–607 (PRVT…MVLS). Asn-387 is a glycosylation site (N-linked (GlcNAc...) asparagine). Residues 402-425 (SDSGEYTCFASNSVDSIHATAFII) form an LRR 7 repeat. N-linked (GlcNAc...) asparagine glycans are attached at residues Asn-637, Asn-696, Asn-716, and Asn-728. 4 disulfides stabilise this stretch: Cys-720-Cys-882, Cys-729-Cys-745, Cys-844-Cys-854, and Cys-848-Cys-872. Asp-823 is a heme b binding site. The Proton acceptor role is filled by His-824. Asp-825 serves as a coordination point for Ca(2+). Ca(2+)-binding residues include Thr-904, Tyr-906, Asp-908, and Ser-910. Cys-956 and Cys-967 are disulfide-bonded. Asn-961 is a glycosylation site (N-linked (GlcNAc...) asparagine). Residues Glu-977 and His-1071 each coordinate heme b. The LRR 8 repeat unit spans residues 1148–1172 (ALDLAAINIQRGRDHGIPPYHDYRV). Residue Tyr-1173 is modified to Phosphotyrosine. 2 cysteine pairs are disulfide-bonded: Cys-1174–Cys-1231 and Cys-1272–Cys-1298. Asn-1175 carries N-linked (GlcNAc...) asparagine glycosylation. Ser-1177 carries the post-translational modification Phosphoserine. The stretch at 1267 to 1288 (LARILCDNSDNITRVQQDVFRV) is one LRR 9 repeat. N-linked (GlcNAc...) asparagine glycans are attached at residues Asn-1277 and Asn-1364. Residues 1312-1407 (CCEDCRTRGQ…QINSLESRLS (96 aa)) form a required in homotrimerization region. In terms of domain architecture, VWFC spans 1409 to 1467 (TECVDDSGESHGGNTKWKKDPCTVCECKNGQITCFVEACQPAACPQPVKVEGACCPVCL).

It belongs to the peroxidase family. XPO subfamily. In terms of assembly, homotrimer; disulfide-linked. The homotrimer form is predominant. Homooligomer; disulfide-linked. Oligomerization occurs intracellularly before C-terminal proteolytic cleavage. Interacts with PXDNL; this interaction inhibits the peroxidase activity of PXDN. Requires Ca(2+) as cofactor. It depends on heme b as a cofactor. Post-translationally, processed by FURIN and the proteolytic processing largely depends on the peroxidase activity of PXDN. The proteolytic cleavage occurs after intracellular homotrimerization and releases into the extracellular matrix a large, catalytically active fragment and a smaller fragment consisting primarily of the C-terminal VWFC domain. The processing enhances both peroxidase activity and sulfilimine cross-links formation. Highly expressed in the cardiovascular system. In the embryo, expressed in the corneal epithelial layer. In the adult eyes, expressed in the corneal and lens epithelium. Expressed in lung.

It localises to the secreted. It is found in the extracellular space. The protein localises to the extracellular matrix. The protein resides in the endoplasmic reticulum. Its subcellular location is the cell surface. It localises to the basement membrane. It catalyses the reaction L-lysyl-[collagen] + L-methionyl-[collagen] + H2O2 = [collagen]-L-lysyl-N-S-L-methionyl-[collagen] + 2 H2O + H(+). The catalysed reaction is bromide + H2O2 = hypobromite + H2O. The enzyme catalyses L-lysyl-[collagen] + L-methionyl-[collagen] + hypobromite = [collagen]-L-lysyl-N-S-L-methionyl-[collagen] + bromide + H2O + H(+). It carries out the reaction (5R)-5-hydroxy-L-lysyl-[collagen] + L-methionyl-[collagen] + hypobromite = [collagen]-(5R)-5-hydroxy-L-lysyl-N-S-L-methionyl-[collagen] + bromide + H2O + H(+). It catalyses the reaction (5R)-5-hydroxy-L-lysyl-[collagen] + L-methionyl-[collagen] + H2O2 = [collagen]-(5R)-5-hydroxy-L-lysyl-N-S-L-methionyl-[collagen] + 2 H2O + H(+). The catalysed reaction is L-tyrosyl-[protein] + bromide + H2O2 + H(+) = 3-bromo-L-tyrosyl-[protein] + 2 H2O. The enzyme catalyses hypobromite + L-tyrosyl-[protein] + H(+) = 3-bromo-L-tyrosyl-[protein] + H2O. Thiocyanate inhibits the formation of 3-bromotyrosine. In terms of biological role, catalyzes the two-electron oxidation of bromide by hydrogen peroxide and generates hypobromite as a reactive intermediate which mediates the formation of sulfilimine cross-links between methionine and hydroxylysine residues within an uncross-linked collagen IV/COL4A1 NC1 hexamer. In turns, directly contributes to the collagen IV network-dependent fibronectin/FN and laminin assembly, which is required for full extracellular matrix (ECM)-mediated signaling. Thus, sulfilimine cross-links are essential for growth factor-induced cell proliferation and survival in endothelial cells, an event essential to basement membrane integrity. In addition, through the bromide oxidation, may promote tubulogenesis and induce angiogenesis through ERK1/2, Akt, and FAK pathways. Moreover brominates alpha2 collagen IV chain/COL4A2 at 'Tyr-1480' and leads to bromine enrichment of the basement membranes. In vitro, can also catalyze the two-electron oxidation of thiocyanate and iodide and these two substrates could effectively compete with bromide and thus inhibit the formation of sulfilimine bonds. Binds laminins. May play a role in the organization of eyeball structure and lens development during eye development. This Mus musculus (Mouse) protein is Peroxidasin homolog.